Reading from the N-terminus, the 430-residue chain is Lipoyl synthase, mitochondrial (430 aa).

The transit peptide at 1-29 (MASPVPIQRLQAPLRRSLARAAALSTRSY) directs the protein to the mitochondrion. Residues 28-58 (SYATIPSGPSSQPTSQESSSAASASAPATKP) show a composition bias toward low complexity. The tract at residues 28 to 62 (SYATIPSGPSSQPTSQESSSAASASAPATKPRPTY) is disordered. 7 residues coordinate [4Fe-4S] cluster: cysteine 142, cysteine 147, cysteine 153, cysteine 173, cysteine 177, cysteine 180, and serine 390. Positions 156–379 (GSNKAAATAT…RQRALDMGFL (224 aa)) constitute a Radical SAM core domain.

This sequence belongs to the radical SAM superfamily. Lipoyl synthase family. Requires [4Fe-4S] cluster as cofactor.

It localises to the mitochondrion. It catalyses the reaction [[Fe-S] cluster scaffold protein carrying a second [4Fe-4S](2+) cluster] + N(6)-octanoyl-L-lysyl-[protein] + 2 oxidized [2Fe-2S]-[ferredoxin] + 2 S-adenosyl-L-methionine + 4 H(+) = [[Fe-S] cluster scaffold protein] + N(6)-[(R)-dihydrolipoyl]-L-lysyl-[protein] + 4 Fe(3+) + 2 hydrogen sulfide + 2 5'-deoxyadenosine + 2 L-methionine + 2 reduced [2Fe-2S]-[ferredoxin]. It functions in the pathway protein modification; protein lipoylation via endogenous pathway; protein N(6)-(lipoyl)lysine from octanoyl-[acyl-carrier-protein]: step 2/2. In terms of biological role, catalyzes the radical-mediated insertion of two sulfur atoms into the C-6 and C-8 positions of the octanoyl moiety bound to the lipoyl domains of lipoate-dependent enzymes, thereby converting the octanoylated domains into lipoylated derivatives. This Neurospora crassa (strain ATCC 24698 / 74-OR23-1A / CBS 708.71 / DSM 1257 / FGSC 987) protein is Lipoyl synthase, mitochondrial.